The sequence spans 249 residues: AA9 family lytic polysaccharide monooxygenase cel61B (249 aa).

A signal peptide spans 1–19; sequence MKSCAILAALGCLAGSVLG. A Cu(2+)-binding site is contributed by H20. N-linked (GlcNAc...) asparagine glycosylation occurs at N25. Intrachain disulfides connect C78–C198 and C120–C124. H108 is a binding site for Cu(2+). H184 and Q193 together coordinate O2. Position 195 (Y195) interacts with Cu(2+).

Belongs to the polysaccharide monooxygenase AA9 family. As to quaternary structure, monomer. Requires Cu(2+) as cofactor.

Its subcellular location is the secreted. It carries out the reaction [(1-&gt;4)-beta-D-glucosyl]n+m + reduced acceptor + O2 = 4-dehydro-beta-D-glucosyl-[(1-&gt;4)-beta-D-glucosyl]n-1 + [(1-&gt;4)-beta-D-glucosyl]m + acceptor + H2O.. In terms of biological role, lytic polysaccharide monooxygenase (LPMO) that depolymerizes crystalline and amorphous polysaccharides via the oxidation of scissile alpha- or beta-(1-4)-glycosidic bonds, yielding C1 or C4 oxidation products. Catalysis by LPMOs requires the reduction of the active-site copper from Cu(II) to Cu(I) by a reducing agent and H(2)O(2) or O(2) as a cosubstrate. The sequence is that of AA9 family lytic polysaccharide monooxygenase cel61B from Hypocrea jecorina (strain QM6a) (Trichoderma reesei).